The sequence spans 315 residues: Transaldolase (315 aa).

Lysine 125 functions as the Schiff-base intermediate with substrate in the catalytic mechanism.

This sequence belongs to the transaldolase family. Type 1 subfamily. Homodimer.

The protein resides in the cytoplasm. It catalyses the reaction D-sedoheptulose 7-phosphate + D-glyceraldehyde 3-phosphate = D-erythrose 4-phosphate + beta-D-fructose 6-phosphate. Its pathway is carbohydrate degradation; pentose phosphate pathway; D-glyceraldehyde 3-phosphate and beta-D-fructose 6-phosphate from D-ribose 5-phosphate and D-xylulose 5-phosphate (non-oxidative stage): step 2/3. Functionally, transaldolase is important for the balance of metabolites in the pentose-phosphate pathway. This chain is Transaldolase, found in Polaromonas sp. (strain JS666 / ATCC BAA-500).